The primary structure comprises 259 residues: Phosphoadenosine 5'-phosphosulfate reductase (259 aa).

Cys244 serves as the catalytic Nucleophile; cysteine thiosulfonate intermediate.

Belongs to the PAPS reductase family. CysH subfamily.

The protein resides in the cytoplasm. The enzyme catalyses [thioredoxin]-disulfide + sulfite + adenosine 3',5'-bisphosphate + 2 H(+) = [thioredoxin]-dithiol + 3'-phosphoadenylyl sulfate. It participates in sulfur metabolism; hydrogen sulfide biosynthesis; sulfite from sulfate: step 3/3. Functionally, catalyzes the formation of sulfite from phosphoadenosine 5'-phosphosulfate (PAPS) using thioredoxin as an electron donor. This is Phosphoadenosine 5'-phosphosulfate reductase from Vibrio campbellii (strain ATCC BAA-1116).